Consider the following 615-residue polypeptide: Sodium-dependent neutral amino acid transporter B(0)AT3 (615 aa).

Topologically, residues methionine 1–tyrosine 26 are cytoplasmic. A helical transmembrane segment spans residues leucine 27–cysteine 47. Residues glutamine 48–glycine 52 are Extracellular-facing. Residues glycine 53–isoleucine 73 form a helical membrane-spanning segment. Topologically, residues glutamate 74–serine 105 are cytoplasmic. A helical transmembrane segment spans residues valine 106–leucine 126. The Extracellular segment spans residues asparagine 127–threonine 177. Asparagine 143 and asparagine 167 each carry an N-linked (GlcNAc...) asparagine glycan. A helical membrane pass occupies residues isoleucine 178–isoleucine 198. The Cytoplasmic portion of the chain corresponds to arginine 199–lysine 206. The helical transmembrane segment at valine 207–leucine 227 threads the bilayer. Over threonine 228 to aspartate 255 the chain is Extracellular. A helical transmembrane segment spans residues alanine 256 to serine 276. The Cytoplasmic portion of the chain corresponds to tyrosine 277–alanine 288. The chain crosses the membrane as a helical span at residues valine 289–valine 309. Over methionine 310–glycine 397 the chain is Extracellular. Asparagine 353 carries an N-linked (GlcNAc...) asparagine glycan. The helical transmembrane segment at alanine 398–phenylalanine 418 threads the bilayer. Over glycine 419–glutamate 441 the chain is Cytoplasmic. The chain crosses the membrane as a helical span at residues valine 442–serine 462. Topologically, residues glycine 463–serine 472 are extracellular. A helical transmembrane segment spans residues phenylalanine 473–isoleucine 493. Residues tyrosine 494–arginine 520 are Cytoplasmic-facing. The helical transmembrane segment at valine 521–threonine 541 threads the bilayer. Over proline 542–threonine 570 the chain is Extracellular. A helical membrane pass occupies residues cysteine 571–leucine 591. Residues serine 592–cysteine 615 are Cytoplasmic-facing.

Belongs to the sodium:neurotransmitter symporter (SNF) (TC 2.A.22) family. SLC6A18 subfamily. Interacts with CLTRN; this interaction regulates the trafficking of SLC6A18 to the cell membrane and its activity. As to expression, expressed predominantly in kidney.

It is found in the apical cell membrane. The protein resides in the cell membrane. It catalyses the reaction L-alanine(out) + chloride(out) + 2 Na(+)(out) = L-alanine(in) + chloride(in) + 2 Na(+)(in). The catalysed reaction is glycine(out) + chloride(out) + 2 Na(+)(out) = glycine(in) + chloride(in) + 2 Na(+)(in). The enzyme catalyses L-methionine(out) + chloride(out) + 2 Na(+)(out) = L-methionine(in) + chloride(in) + 2 Na(+)(in). It carries out the reaction L-valine(out) + chloride(out) + 2 Na(+)(out) = L-valine(in) + chloride(in) + 2 Na(+)(in). It catalyses the reaction L-isoleucine(out) + chloride(out) + 2 Na(+)(out) = L-isoleucine(in) + chloride(in) + 2 Na(+)(in). The catalysed reaction is L-serine(out) + chloride(out) + 2 Na(+)(out) = L-serine(in) + chloride(in) + 2 Na(+)(in). The enzyme catalyses L-leucine(out) + chloride(out) + 2 Na(+)(out) = L-leucine(in) + chloride(in) + 2 Na(+)(in). Symporter that transports one amino acid molecule together with two sodium and one chloride ions in kidneys and plays a role in the neutral amino acids reabsorption. Preferentially transports neutral amino acids such as L-glycine and L-alanine but also other neutral amino acids. Required CLTRN for cell surface expression and for its amino acid transporter activity. The transport mechanism is pH-independent. This Mus musculus (Mouse) protein is Sodium-dependent neutral amino acid transporter B(0)AT3.